Consider the following 203-residue polypeptide: ATP phosphoribosyltransferase (203 aa).

The protein belongs to the ATP phosphoribosyltransferase family. Short subfamily. In terms of assembly, heteromultimer composed of HisG and HisZ subunits.

The protein localises to the cytoplasm. It catalyses the reaction 1-(5-phospho-beta-D-ribosyl)-ATP + diphosphate = 5-phospho-alpha-D-ribose 1-diphosphate + ATP. The protein operates within amino-acid biosynthesis; L-histidine biosynthesis; L-histidine from 5-phospho-alpha-D-ribose 1-diphosphate: step 1/9. Functionally, catalyzes the condensation of ATP and 5-phosphoribose 1-diphosphate to form N'-(5'-phosphoribosyl)-ATP (PR-ATP). Has a crucial role in the pathway because the rate of histidine biosynthesis seems to be controlled primarily by regulation of HisG enzymatic activity. The sequence is that of ATP phosphoribosyltransferase from Campylobacter fetus subsp. fetus (strain 82-40).